A 951-amino-acid chain; its full sequence is Valine--tRNA ligase (951 aa).

The 'HIGH' region signature appears at 40 to 50 (PNVTGSLHMGH). The short motif at 551–555 (KMSKS) is the 'KMSKS' region element. ATP is bound at residue lysine 554. Positions 879-950 (MAGLIDVEAE…LLEQKAKIES (72 aa)) form a coiled coil.

It belongs to the class-I aminoacyl-tRNA synthetase family. ValS type 1 subfamily. As to quaternary structure, monomer.

Its subcellular location is the cytoplasm. It catalyses the reaction tRNA(Val) + L-valine + ATP = L-valyl-tRNA(Val) + AMP + diphosphate. Functionally, catalyzes the attachment of valine to tRNA(Val). As ValRS can inadvertently accommodate and process structurally similar amino acids such as threonine, to avoid such errors, it has a 'posttransfer' editing activity that hydrolyzes mischarged Thr-tRNA(Val) in a tRNA-dependent manner. This is Valine--tRNA ligase from Pseudoalteromonas translucida (strain TAC 125).